The primary structure comprises 52 residues: Thiocillin (52 aa).

Positions 1–38 (MSEIKKALNTLEIEDFDAIEMVDVDAMPENEALEIMGA) are excised as a propeptide. The thiazole-4-carboxylic acid (Ser-Cys) cross-link spans 39 to 40 (SC). Residues 39–47 (SCTTCVCTC) constitute a cross-link (pyridine-2,5-dicarboxylic acid (Ser-Cys) (with S-48)). A cross-link (pyridine-2,5-dicarboxylic acid (Ser-Ser) (with C-47)) is located at residues 39–48 (SCTTCVCTCS). T42 bears the (Z)-2,3-didehydrobutyrine mark. The thiazole-4-carboxylic acid (Thr-Cys) cross-link spans 42–43 (TC). The residue at position 44 (V44) is a 3-hydroxyvaline (Val); partial. Residues 44–45 (VC) constitute a cross-link (thiazole-4-carboxylic acid (Val-Cys)). O-methylthreonine; partial is present on T46. The thiazole-4-carboxylic acid (Thr-Cys) cross-link spans 46 to 47 (TC). Positions 48 to 49 (SC) form a cross-link, thiazole-4-carboxylic acid (Ser-Cys). The segment at residues 49–50 (CC) is a cross-link (thiazole-4-carboxylic acid (Cys-Cys)). Position 51 is a (Z)-2,3-didehydrobutyrine (T51). The residue at position 52 (T52) is a 1-amino-2-propanone; alternate. A Decarboxylated threonine; alternate modification is found at T52.

Belongs to the thiocillin family. In terms of processing, maturation of thiazole and oxazole containing antibiotics involves the enzymatic condensation of a Cys, Ser or Thr with the alpha-carbonyl of the preceding amino acid to form a thioether or ether bond, then dehydration to form a double bond with the alpha-amino nitrogen. Thiazoline or oxazoline ring are dehydrogenated to form thiazole or oxazole rings. Post-translationally, maturation of pyridinyl containing antibiotics involves the cross-linking of a Ser and a Cys-Ser pair usually separated by 7 or 8 residues along the peptide chain. The Ser residues are dehydrated to didehydroalanines, then bonded between their beta carbons. The alpha carbonyl of the Cys condenses with alpha carbon of the first Ser to form a pyridinyl ring. The ring may be multiply dehydrogenated to form a pyridine ring with loss of the amino nitrogen of the first Ser. The 8 possible modification isomers, differing in the presence of modifications at three positions, have been characterized in PubMed:19196969. Val-44 is modified to 3-hydroxyvaline in forms thiocillin I, thiocillin II, YM-266183, and YM-266184. Thr-46 is modified to O-methylthreonine in forms thiocillin II, thiocillin III, thiocillin IV, and YM-266184. Thr-52 is decarboxylated to (R)-1-aminopropan-2-ol in forms micrococcin P1, thiocillin I, thiocillin II, and thiocillin III. Thr-52 is decarboxylated and oxidized to 1-amino-2-propanone in forms micrococcin P2, YM-266183, YM-266184. and thiocillin IV. In terms of processing, the structure of 2,3-didehydrobutyrines is not discussed in PubMed:19196969. However, in Fig. 3 the residues are diagrammed as Z-isomers.

The protein resides in the secreted. In terms of biological role, has bacteriocidal activity against Gram-positive bacteria, but not against Gram-negative bacteria. Inhibits bacterial protein biosynthesis by acting on the elongation factor Tu (EF-Tu). The sequence is that of Thiocillin from Bacillus cereus (strain ATCC 14579 / DSM 31 / CCUG 7414 / JCM 2152 / NBRC 15305 / NCIMB 9373 / NCTC 2599 / NRRL B-3711).